We begin with the raw amino-acid sequence, 84 residues long: Beta-defensin 119 (84 aa).

The first 21 residues, 1–21, serve as a signal peptide directing secretion; sequence MKFLFLFLAILLATKIPVISG. Disulfide bonds link Cys-28–Cys-55, Cys-35–Cys-49, and Cys-39–Cys-56.

It belongs to the beta-defensin family.

It is found in the secreted. Functionally, has antibacterial activity. In Macaca fascicularis (Crab-eating macaque), this protein is Beta-defensin 119 (DEFB119).